A 147-amino-acid polypeptide reads, in one-letter code: Deoxyuridine 5'-triphosphate nucleotidohydrolase (147 aa).

Residues 63–65 (RSG), N76, and 80–82 (TID) each bind substrate.

This sequence belongs to the dUTPase family. It depends on Mg(2+) as a cofactor.

It carries out the reaction dUTP + H2O = dUMP + diphosphate + H(+). Its pathway is pyrimidine metabolism; dUMP biosynthesis; dUMP from dCTP (dUTP route): step 2/2. Functionally, this enzyme is involved in nucleotide metabolism: it produces dUMP, the immediate precursor of thymidine nucleotides and it decreases the intracellular concentration of dUTP so that uracil cannot be incorporated into DNA. This chain is Deoxyuridine 5'-triphosphate nucleotidohydrolase, found in Chlamydia caviae (strain ATCC VR-813 / DSM 19441 / 03DC25 / GPIC) (Chlamydophila caviae).